We begin with the raw amino-acid sequence, 350 residues long: FAD:protein FMN transferase (350 aa).

The N-terminal stretch at 1-19 is a signal peptide; sequence MKMTFCRAVCLAAAFLLMG. Residue Cys-20 is the site of N-palmitoyl cysteine attachment. A lipid anchor (S-diacylglycerol cysteine) is attached at Cys-20. FAD-binding positions include Met-41, Tyr-78, 119–121, and Asp-181; that span reads AMD. Thr-184 contributes to the Mg(2+) binding site. Glu-187 and Ile-272 together coordinate FAD. Mg(2+) is bound by residues Asp-298, Asp-301, and Thr-302.

It belongs to the ApbE family. Homodimer. The cofactor is Mg(2+).

Its subcellular location is the cell inner membrane. It catalyses the reaction L-threonyl-[protein] + FAD = FMN-L-threonyl-[protein] + AMP + H(+). Functionally, flavin transferase that catalyzes the transfer of the FMN moiety of FAD and its covalent binding to the hydroxyl group of a threonine residue in a target flavoprotein such as NqrB and NqrC, two subunits of the NQR complex. This Salmonella typhimurium (strain LT2 / SGSC1412 / ATCC 700720) protein is FAD:protein FMN transferase.